The following is a 518-amino-acid chain: Retinal dehydrogenase 2 (518 aa).

Phosphotyrosine is present on Tyr-168. NAD(+)-binding positions include 184 to 186 (IPW), 210 to 213 (KPAE), and 264 to 266 (STE). Glu-286 acts as the Proton acceptor in catalysis. Cys-320 acts as the Nucleophile in catalysis. Ser-351 is subject to Phosphoserine. NAD(+) contacts are provided by residues 366 to 370 (KQYNK) and Glu-417.

Belongs to the aldehyde dehydrogenase family. Homotetramer.

It is found in the cytoplasm. It catalyses the reaction retinal + NAD(+) + H2O = retinoate + NADH + 2 H(+). The catalysed reaction is all-trans-retinal + NAD(+) + H2O = all-trans-retinoate + NADH + 2 H(+). The enzyme catalyses all-trans-13,14-dihydroretinal + NAD(+) + H2O = all-trans-13,14-dihydroretinoate + NADH + 2 H(+). The protein operates within cofactor metabolism; retinol metabolism. Catalyzes the NAD-dependent oxidation of aldehyde substrates, such as all-trans-retinal and all-trans-13,14-dihydroretinal, to their corresponding carboxylic acids, all-trans-retinoate and all-trans-13,14-dihydroretinoate, respectively. Retinoate signaling is critical for the transcriptional control of many genes, for instance it is crucial for initiation of meiosis in both male and female. Recognizes retinal as substrate, both in its free form and when bound to cellular retinol-binding protein. Can metabolize octanal and decanal, but has only very low activity with benzaldehyde, acetaldehyde and propanal. Displays complete lack of activity with citral. This Homo sapiens (Human) protein is Retinal dehydrogenase 2 (ALDH1A2).